A 98-amino-acid chain; its full sequence is EKC/KEOPS complex subunit GON7 (98 aa).

Met-1 carries the N-acetylmethionine modification. The disordered stretch occupies residues Asp-55–Ser-98. Over residues Glu-61 to Asn-79 the composition is skewed to acidic residues.

As to quaternary structure, component of the EKC/KEOPS complex composed of at least GON7, TP53RK, TPRKB, OSGEP and LAGE3; the whole complex dimerizes.

It is found in the nucleus. Functionally, component of the EKC/KEOPS complex that is required for the formation of a threonylcarbamoyl group on adenosine at position 37 (t(6)A37) in tRNAs that read codons beginning with adenine. The complex is probably involved in the transfer of the threonylcarbamoyl moiety of threonylcarbamoyl-AMP (TC-AMP) to the N6 group of A37. GON7 plays a supporting role to the catalytic subunit OSGEP in the complex. This chain is EKC/KEOPS complex subunit GON7, found in Mus musculus (Mouse).